Reading from the N-terminus, the 161-residue chain is Small ribosomal subunit protein uS9 (161 aa).

This sequence belongs to the universal ribosomal protein uS9 family.

This is Small ribosomal subunit protein uS9 from Bartonella tribocorum (strain CIP 105476 / IBS 506).